The chain runs to 162 residues: MSGLTHFDAAGHAHMVDVGGKQETQRIAIARGTIRMLPATFALIRDGKAKKGDVLGVARIAAIQGAKRTAELIPLCHPLALTRVAVDFELDDALPGVHCVAQVETFGRTGVEMEALTAVQVGLLTVYDMCKAVDRGMVITEVSVREKRGGKSGDWKAEDTAG.

Substrate-binding positions include 75–77 and 113–114; these read LCH and ME. Asp128 is an active-site residue.

Belongs to the MoaC family. As to quaternary structure, homohexamer; trimer of dimers.

The catalysed reaction is (8S)-3',8-cyclo-7,8-dihydroguanosine 5'-triphosphate = cyclic pyranopterin phosphate + diphosphate. It participates in cofactor biosynthesis; molybdopterin biosynthesis. Its function is as follows. Catalyzes the conversion of (8S)-3',8-cyclo-7,8-dihydroguanosine 5'-triphosphate to cyclic pyranopterin monophosphate (cPMP). This is Cyclic pyranopterin monophosphate synthase from Burkholderia ambifaria (strain MC40-6).